A 319-amino-acid chain; its full sequence is 4-diphosphocytidyl-2-C-methyl-D-erythritol kinase (319 aa).

The active site involves Lys21. 106–116 (PIGAGLAGGSS) contributes to the ATP binding site. Asp148 is an active-site residue.

The protein belongs to the GHMP kinase family. IspE subfamily.

It carries out the reaction 4-CDP-2-C-methyl-D-erythritol + ATP = 4-CDP-2-C-methyl-D-erythritol 2-phosphate + ADP + H(+). The protein operates within isoprenoid biosynthesis; isopentenyl diphosphate biosynthesis via DXP pathway; isopentenyl diphosphate from 1-deoxy-D-xylulose 5-phosphate: step 3/6. Catalyzes the phosphorylation of the position 2 hydroxy group of 4-diphosphocytidyl-2C-methyl-D-erythritol. The protein is 4-diphosphocytidyl-2-C-methyl-D-erythritol kinase of Prochlorococcus marinus (strain MIT 9313).